The sequence spans 77 residues: Delta/omega-plectoxin-Pt1a (77 aa).

The signal sequence occupies residues 1-20 (MKHLIVAVVLLSALAICTSA). Positions 21-34 (EEEQVNVPFRPEER) are excised as a propeptide. 5 disulfide bridges follow: Cys38–Cys51, Cys45–Cys57, Cys50–Cys67, Cys54–Cys74, and Cys59–Cys65. Residue Ser73 is the site of O-palmitoyl serine attachment. Cys74 carries the post-translational modification Cysteine amide.

This sequence belongs to the neurotoxin 02 (plectoxin) family. 01 (Tx3) subfamily. In terms of tissue distribution, expressed by the venom gland.

It is found in the secreted. In terms of biological role, excitatory toxin that acts on both calcium and sodium (Nav) channels. It preferentially blocks a subset of calcium channels that is apparently not required for neurotransmitter release, it decreases threshold for sodium channel activation and it slows sodium channel inactivation. As it enhances synaptic transmission by prolonging presynaptic release of neurotransmitter, its effects on sodium and calcium channels may act synergistically to sustain the terminal excitability. This is Delta/omega-plectoxin-Pt1a from Plectreurys tristis (Spider).